Consider the following 990-residue polypeptide: Pentatricopeptide repeat-containing protein At4g33170 (990 aa).

PPR repeat units follow at residues 73–107, 109–139, 144–178, 179–209, 210–244, 279–313, 314–348, 349–379, 380–414, 415–450, 451–477, 481–515, 516–550, 551–581, 582–616, 617–651, 652–682, 683–717, 718–753, and 754–788; these read ERFL…DLVS, NSIL…LRQD, SRMT…GLDG, DEFV…MPYR, DVVL…GLNP, EIIF…DVEC, DQVT…GLDL, MLTV…MSER, DLIS…GLKP, DQYT…NNVS, DSFV…LFER, DLVA…GERS, DDFT…GYDL, DLWV…IPVP, DDVA…GVLP, DEFT…NCTN, DPFV…IEMM, NITA…GIKP, DKVT…GIKP, and EIEH…ASAS. Residues 789 to 864 form a type E motif region; the sequence is MYRTLLAACR…DPGFSWIEVK (76 aa). The segment at 865 to 895 is type E(+) motif; that stretch reads NKIHIFVVDDRSNRQTELIYRKVKDMIRDIK. Positions 896-990 are type DYW motif; it reads QEGYVPETDF…DGICSCGDYW (95 aa).

It belongs to the PPR family. PCMP-H subfamily.

This chain is Pentatricopeptide repeat-containing protein At4g33170 (PCMP-H53), found in Arabidopsis thaliana (Mouse-ear cress).